We begin with the raw amino-acid sequence, 1505 residues long: ABC transporter C family member 13 (1505 aa).

The next 12 helical transmembrane spans lie at 11–31 (EAAA…LLLL), 54–68 (AVDG…VGAW), 71–91 (AALA…SYEV), 102–122 (ALLL…LAMQ), 131–151 (FPVL…GIAY), 171–191 (MVAN…GVMG), 313–333 (AFAA…SYFV), 336–356 (LSGK…FFVA), 367–387 (WYLG…AMVY), 421–441 (AWYF…LAIL), 447–467 (IAMV…VPVA), and 534–554 (FVFW…CILL). Residues 314-589 (FAAVNTIVSY…FPDLISMIAQ (276 aa)) enclose the ABC transmembrane type-1 1 domain. The region spanning 623–846 (ININDATFSW…GTDFNALVCA (224 aa)) is the ABC transporter 1 domain. 658–665 (GVIGSGKS) serves as a coordination point for ATP. A compositionally biased stretch (polar residues) spans 881 to 897 (DNLKNKVSNNEKPSSTR). Positions 881-919 (DNLKNKVSNNEKPSSTRGIKEKKKKPEERKKKRSVQEEE) are disordered. Basic and acidic residues predominate over residues 904–919 (KKPEERKKKRSVQEEE). Transmembrane regions (helical) follow at residues 940-960 (GTLI…QIAS), 980-1000 (SVVL…FVFV), 1055-1077 (IAFR…AVMS), 1081-1103 (WQVL…YYIA), 1149-1169 (LLDC…WLCL), and 1174-1194 (LSTF…PGTI). Positions 945–1215 (LIILAQTMFQ…GLNLNARMSR (271 aa)) constitute an ABC transmembrane type-1 2 domain. The region spanning 1262-1496 (IELVDLKVRY…KSSMFMQLVS (235 aa)) is the ABC transporter 2 domain. 1296-1303 (GRTGSGKS) contributes to the ATP binding site.

Belongs to the ABC transporter superfamily. ABCC family. Conjugate transporter (TC 3.A.1.208) subfamily.

The protein resides in the membrane. ABC transporter that may affect phytic acid transport and compartmentalization. May function directly or indirectly in removing phytic acid from the cytosol or in vesicle trafficking. Required for phytic acid accumulation in developing seeds. Phytic acid is the primary storage form of phosphorus in cereal grains and other plant seeds. This chain is ABC transporter C family member 13, found in Oryza sativa subsp. indica (Rice).